We begin with the raw amino-acid sequence, 1058 residues long: Carbamoyl phosphate synthase large chain (1058 aa).

The interval 1-401 (MPKRKDIQKI…SLLKACRSLE (401 aa)) is carboxyphosphate synthetic domain. Arg-129, Arg-169, Gly-175, Gly-176, Arg-208, Ile-210, Glu-215, Gly-241, Ile-242, His-243, Gln-284, and Glu-298 together coordinate ATP. In terms of domain architecture, ATP-grasp 1 spans 133–327 (KQLMQELDQP…IAKLAAKIAV (195 aa)). Residues Gln-284, Glu-298, and Asn-300 each contribute to the Mg(2+) site. Mn(2+)-binding residues include Gln-284, Glu-298, and Asn-300. The oligomerization domain stretch occupies residues 402 to 546 (IGVCHNEMTS…YSTYELENES (145 aa)). The tract at residues 547 to 929 (VQSNKESILV…ALYKAFEANN (383 aa)) is carbamoyl phosphate synthetic domain. Positions 671-861 (EKALKELGIP…MAQIATKLIL (191 aa)) constitute an ATP-grasp 2 domain. ATP-binding residues include Arg-707, Ser-746, Ile-748, Glu-752, Gly-777, Val-778, His-779, Ser-780, Gln-820, and Glu-832. Gln-820, Glu-832, and Asn-834 together coordinate Mg(2+). 3 residues coordinate Mn(2+): Gln-820, Glu-832, and Asn-834. Positions 930–1058 (SHLSEFGQIV…ESRCFNIEAI (129 aa)) constitute an MGS-like domain. An allosteric domain region spans residues 930 to 1058 (SHLSEFGQIV…ESRCFNIEAI (129 aa)).

The protein belongs to the CarB family. As to quaternary structure, composed of two chains; the small (or glutamine) chain promotes the hydrolysis of glutamine to ammonia, which is used by the large (or ammonia) chain to synthesize carbamoyl phosphate. Tetramer of heterodimers (alpha,beta)4. Requires Mg(2+) as cofactor. It depends on Mn(2+) as a cofactor.

The enzyme catalyses hydrogencarbonate + L-glutamine + 2 ATP + H2O = carbamoyl phosphate + L-glutamate + 2 ADP + phosphate + 2 H(+). The catalysed reaction is hydrogencarbonate + NH4(+) + 2 ATP = carbamoyl phosphate + 2 ADP + phosphate + 2 H(+). It participates in amino-acid biosynthesis; L-arginine biosynthesis; carbamoyl phosphate from bicarbonate: step 1/1. The protein operates within pyrimidine metabolism; UMP biosynthesis via de novo pathway; (S)-dihydroorotate from bicarbonate: step 1/3. In terms of biological role, large subunit of the glutamine-dependent carbamoyl phosphate synthetase (CPSase). CPSase catalyzes the formation of carbamoyl phosphate from the ammonia moiety of glutamine, carbonate, and phosphate donated by ATP, constituting the first step of 2 biosynthetic pathways, one leading to arginine and/or urea and the other to pyrimidine nucleotides. The large subunit (synthetase) binds the substrates ammonia (free or transferred from glutamine from the small subunit), hydrogencarbonate and ATP and carries out an ATP-coupled ligase reaction, activating hydrogencarbonate by forming carboxy phosphate which reacts with ammonia to form carbamoyl phosphate. The protein is Carbamoyl phosphate synthase large chain of Streptococcus pyogenes serotype M6 (strain ATCC BAA-946 / MGAS10394).